Here is a 154-residue protein sequence, read N- to C-terminus: Small ribosomal subunit protein bS18 (154 aa).

The tract at residues 1 to 82 (MEKKTTKKAT…PFAKYNRGYP (82 aa)) is disordered. Positions 8-19 (KATASKTTTTKK) are enriched in low complexity. Residues 20 to 32 (AAAEKTEIKETKK) show a composition bias toward basic and acidic residues. Residues 33 to 49 (TTTTKTSTAKKATTASV) show a composition bias toward low complexity. Residues 50 to 69 (EKTEVKETKKSSDNKKEFNP) show a composition bias toward basic and acidic residues.

The protein belongs to the bacterial ribosomal protein bS18 family. Part of the 30S ribosomal subunit. Forms a tight heterodimer with protein bS6.

Functionally, binds as a heterodimer with protein bS6 to the central domain of the 16S rRNA, where it helps stabilize the platform of the 30S subunit. The sequence is that of Small ribosomal subunit protein bS18 from Malacoplasma penetrans (strain HF-2) (Mycoplasma penetrans).